A 159-amino-acid polypeptide reads, in one-letter code: Cytochrome c-type biogenesis protein CcmE (159 aa).

The Cytoplasmic portion of the chain corresponds to 1 to 8 (MNLRRKNR). The chain crosses the membrane as a helical; Signal-anchor for type II membrane protein span at residues 9-29 (LWVVCAVLAGLGLTTALVLYA). The Periplasmic portion of the chain corresponds to 30–159 (LRANIDLFYT…PQRADKDTSS (130 aa)). Positions 129 to 159 (KHDENYTPPEVEKAMQENHRRPQRADKDTSS) are disordered. Histidine 130 and tyrosine 134 together coordinate heme.

This sequence belongs to the CcmE/CycJ family.

It is found in the cell inner membrane. In terms of biological role, heme chaperone required for the biogenesis of c-type cytochromes. Transiently binds heme delivered by CcmC and transfers the heme to apo-cytochromes in a process facilitated by CcmF and CcmH. This Salmonella typhimurium (strain LT2 / SGSC1412 / ATCC 700720) protein is Cytochrome c-type biogenesis protein CcmE.